Here is a 379-residue protein sequence, read N- to C-terminus: Alkanesulfonate monooxygenase (379 aa).

This sequence belongs to the SsuD family.

It carries out the reaction an alkanesulfonate + FMNH2 + O2 = an aldehyde + FMN + sulfite + H2O + 2 H(+). Its function is as follows. Catalyzes the desulfonation of aliphatic sulfonates. The chain is Alkanesulfonate monooxygenase from Pseudomonas syringae pv. tomato (strain ATCC BAA-871 / DC3000).